A 96-amino-acid chain; its full sequence is Protein Vpr (96 aa).

The homooligomerization stretch occupies residues methionine 1–leucine 42. Phosphoserine; by host occurs at positions 79, 94, and 96.

It belongs to the HIV-1 VPR protein family. In terms of assembly, homooligomer, may form homodimer. Interacts with p6-gag region of the Pr55 Gag precursor protein through a (Leu-X-X)4 motif near the C-terminus of the P6gag protein. Interacts with host UNG. May interact with host RAD23A/HHR23A. Interacts with host VPRBP/DCAF1, leading to hijack the CUL4A-RBX1-DDB1-DCAF1/VPRBP complex, mediating ubiquitination of host proteins such as TERT and ZGPAT and arrest of the cell cycle in G2 phase. In terms of processing, phosphorylated on several residues by host. These phosphorylations regulate VPR activity for the nuclear import of the HIV-1 pre-integration complex.

It is found in the virion. The protein resides in the host nucleus. It localises to the host extracellular space. Functionally, during virus replication, may deplete host UNG protein, and incude G2-M cell cycle arrest. Acts by targeting specific host proteins for degradation by the 26S proteasome, through association with the cellular CUL4A-DDB1 E3 ligase complex by direct interaction with host VPRPB/DCAF-1. Cell cycle arrest reportedly occurs within hours of infection and is not blocked by antiviral agents, suggesting that it is initiated by the VPR carried into the virion. Additionally, VPR induces apoptosis in a cell cycle dependent manner suggesting that these two effects are mechanistically linked. Detected in the serum and cerebrospinal fluid of AIDS patient, VPR may also induce cell death to bystander cells. During virus entry, plays a role in the transport of the viral pre-integration (PIC) complex to the host nucleus. This function is crucial for viral infection of non-dividing macrophages. May act directly at the nuclear pore complex, by binding nucleoporins phenylalanine-glycine (FG)-repeat regions. The sequence is that of Protein Vpr from Human immunodeficiency virus type 1 group M subtype B (strain 89.6) (HIV-1).